The chain runs to 352 residues: ER-derived vesicles protein ERV41 (352 aa).

The Cytoplasmic segment spans residues 1–23 (MAGLKTFDAFPKTEEQYKKKSTK). The helical transmembrane segment at 24-44 (GGLTSLLTYLFLLFIAWTEFG) threads the bilayer. Topologically, residues 45–311 (EYFGGYIDQQ…FLVRLVAICS (267 aa)) are lumenal. The chain crosses the membrane as a helical span at residues 312–332 (FLVYCASWIFTLLDMALITIM). The Cytoplasmic segment spans residues 333 to 352 (GPKWSLRYQPDDKTKGILDR). Residues 349-350 (IL) carry the Isoleucine-leucine motif motif.

This sequence belongs to the ERGIC family. In terms of assembly, interacts with ERV46.

Its subcellular location is the endoplasmic reticulum membrane. The protein resides in the golgi apparatus membrane. The protein localises to the cytoplasmic vesicle. It is found in the COPII-coated vesicle membrane. In terms of biological role, constituent of COPII-coated endoplasmic reticulum-derived transport vesicles. Required for efficient transport of a subset of secretory proteins to the Golgi. The C-terminal Ile-Leu motif is required for exit from the endoplasmic reticulum. Facilitates retrograde transport from the Golgi to the endoplasmic reticulum. This is ER-derived vesicles protein ERV41 (ERV41) from Saccharomyces cerevisiae (strain ATCC 204508 / S288c) (Baker's yeast).